We begin with the raw amino-acid sequence, 57 residues long: Probable mRNA interferase HicA 1 (57 aa).

Belongs to the HicA mRNA interferase family. In terms of assembly, probably forms a complex with the cognate antitoxin HicB 1 which inhibits the mRNA interferase activity.

Toxic component of a type II toxin-antitoxin (TA) system. A probable translation-independent mRNA interferase. This is Probable mRNA interferase HicA 1 (hicA1) from Photorhabdus laumondii subsp. laumondii (strain DSM 15139 / CIP 105565 / TT01) (Photorhabdus luminescens subsp. laumondii).